Here is a 244-residue protein sequence, read N- to C-terminus: Probable proteasome subunit alpha type-1 (244 aa).

The protein belongs to the peptidase T1A family. As to quaternary structure, the 26S proteasome consists of a 20S proteasome core and two 19S regulatory subunits. The 20S proteasome core is composed of 28 subunits that are arranged in four stacked rings, resulting in a barrel-shaped structure. The two end rings are each formed by seven alpha subunits, and the two central rings are each formed by seven beta subunits. The catalytic chamber with the active sites is on the inside of the barrel.

The protein resides in the cytoplasm. It localises to the nucleus. Its function is as follows. The proteasome is a multicatalytic proteinase complex which is characterized by its ability to cleave peptides with Arg, Phe, Tyr, Leu, and Glu adjacent to the leaving group at neutral or slightly basic pH. The proteasome has an ATP-dependent proteolytic activity. This chain is Probable proteasome subunit alpha type-1, found in Schizosaccharomyces pombe (strain 972 / ATCC 24843) (Fission yeast).